Here is a 119-residue protein sequence, read N- to C-terminus: MIKLKKGDPVIVLTGKDKGKVSKIKQIIRKDGKVKVVVEGVNVVKKHLRPIQGVREGGIVEIEKPIDISNVAYYDEKSKRPVKVGIKYVVEGNKISKVRINKKSGEIIDKVWEKIKKEV.

The protein belongs to the universal ribosomal protein uL24 family. Part of the 50S ribosomal subunit.

Functionally, one of two assembly initiator proteins, it binds directly to the 5'-end of the 23S rRNA, where it nucleates assembly of the 50S subunit. Its function is as follows. One of the proteins that surrounds the polypeptide exit tunnel on the outside of the subunit. The sequence is that of Large ribosomal subunit protein uL24 from Sulfurihydrogenibium sp. (strain YO3AOP1).